Here is a 326-residue protein sequence, read N- to C-terminus: Siroheme decarboxylase NirDL subunit (326 aa).

Belongs to the Ahb/Nir family. Forms a complex composed of NirDL, NirG and NirH. All proteins are required for the total conversion of siroheme to didecarboxysiroheme.

The catalysed reaction is siroheme + 2 H(+) = 12,18-didecarboxysiroheme + 2 CO2. The protein operates within porphyrin-containing compound metabolism. In terms of biological role, involved in heme d1 biosynthesis. Catalyzes the decarboxylation of siroheme into didecarboxysiroheme. Siroheme is probably decarboxylated to monodecarboxysiroheme, which is in turn decarboxylated to didecarboxysiroheme. The sequence is that of Siroheme decarboxylase NirDL subunit from Paracoccus pantotrophus (Thiosphaera pantotropha).